The chain runs to 25 residues: Germin-like protein (25 aa).

Belongs to the germin family. Oligomer (believed to be a pentamer but probably hexamer). Post-translationally, the three different mass spectrometry results appear to arise from different glycosylation variants.

It localises to the secreted. It is found in the extracellular space. The protein resides in the apoplast. Its function is as follows. May play a role in plant defense. Probably has no oxalate oxidase activity even if the active site is conserved. This chain is Germin-like protein, found in Citrus sinensis (Sweet orange).